Consider the following 228-residue polypeptide: 2,3-bisphosphoglycerate-dependent phosphoglycerate mutase (228 aa).

Substrate is bound by residues 8-15 (RHGQSQWN), 21-22 (TG), arginine 60, 87-90 (ERHY), lysine 98, 114-115 (RR), and 180-181 (GN). Histidine 9 acts as the Tele-phosphohistidine intermediate in catalysis. The Proton donor/acceptor role is filled by glutamate 87.

Belongs to the phosphoglycerate mutase family. BPG-dependent PGAM subfamily. Homodimer.

It catalyses the reaction (2R)-2-phosphoglycerate = (2R)-3-phosphoglycerate. It participates in carbohydrate degradation; glycolysis; pyruvate from D-glyceraldehyde 3-phosphate: step 3/5. Functionally, catalyzes the interconversion of 2-phosphoglycerate and 3-phosphoglycerate. This Erythrobacter litoralis (strain HTCC2594) protein is 2,3-bisphosphoglycerate-dependent phosphoglycerate mutase.